The following is a 357-amino-acid chain: MLSLQTLAKKVVACNYLSSDYDYTLQRFGLWWDLGPIHLCNNCKQIFSYKHLQCFSEDDLCLEAALVKAVKSDNLELIRLFVDWGANPEYGLIRVPAVHLKRLCTELGGLTPVTEPRLLEILKEVAKLKSCAGVLLGYDMFCHNPLLETVTRTTLDTVTYTCSNIPLTGDTAHLLLTKFWFALALRHNFTKAIHYFYKRHKNHLYWRVACSLYFNNIFDIHELCREKEICISPNLMMKFACLQKKNYAAIYYCYRLGASLDYGMNLSIYNNNTLNMFFCIDLGATDFDRAQHIAHKAYMYNLSNIFLVKQLFSRDVTLALDVTEPQEIYDRLKSYTSKNLKRAEEYLTAHPEIIVID.

Belongs to the asfivirus MGF 360 family.

Functionally, plays a role in virus cell tropism, and may be required for efficient virus replication in macrophages. The polypeptide is Protein MGF 360-8L (African swine fever virus (isolate Tick/South Africa/Pretoriuskop Pr4/1996) (ASFV)).